The primary structure comprises 86 residues: Toxin Td8 (86 aa).

Positions 1–20 are cleaved as a signal peptide; that stretch reads MTRFVLFLSCFFLIGMVVEC. The LCN-type CS-alpha/beta domain occupies 21–83; it reads KDGYLVGDDG…IWNSATNRCR (63 aa). Cystine bridges form between Cys-31–Cys-82, Cys-35–Cys-57, Cys-43–Cys-63, and Cys-47–Cys-65. Arg-83 is subject to Arginine amide.

In terms of tissue distribution, expressed by the venom gland.

It localises to the secreted. Beta toxins bind voltage-independently at site-4 of sodium channels (Nav) and shift the voltage of activation toward more negative potentials thereby affecting sodium channel activation and promoting spontaneous and repetitive firing. This Tityus discrepans (Venezuelan scorpion) protein is Toxin Td8.